We begin with the raw amino-acid sequence, 195 residues long: COMM domain-containing protein 3 (195 aa).

The COMM domain occupies 124 to 193 (HITDVSWRLE…DASKSLERAT (70 aa)).

This sequence belongs to the COMM domain-containing protein 3 family. In terms of assembly, component of the commander complex consisting of the CCC subcomplex and the retriever subcomplex. Component of the CCC (COMMD/CCDC22/CCDC93) subcomplex consisting of COMMD1, COMMD2, COMMD3, COMMD4, COMMD5, COMMD6, COMMD7, COMMD8, COMMD9, COMMD10, CCDC22 and CCDC93; within the complex forms a heterodimer with COMMD2. Interacts with NFKB1/p105. Interacts with CCDC22, CCDC93, SCNN1B, CUL3, CUL4A, CUL4B, CUL5. In terms of tissue distribution, expressed in kidney collecting duct cells and in the nuclei of proximal convoluted tubule cells in the kidney cortex (at protein level).

The protein localises to the cytoplasm. It is found in the nucleus. Scaffold protein in the commander complex that is essential for endosomal recycling of transmembrane cargos; the commander complex is composed of the CCC subcomplex and the retriever subcomplex. May modulate activity of cullin-RING E3 ubiquitin ligase (CRL) complexes. May down-regulate activation of NF-kappa-B. Modulates Na(+) transport in epithelial cells by regulation of apical cell surface expression of amiloride-sensitive sodium channel (ENaC) subunits. This Rattus norvegicus (Rat) protein is COMM domain-containing protein 3 (Commd3).